The primary structure comprises 351 residues: Probable protein phosphatase 2C 41 (351 aa).

The region spanning 62–348 (FTSICSNRGE…DDISVLCLFF (287 aa)) is the PPM-type phosphatase domain. Residues Asp-98, Gly-99, Asp-293, and Asp-339 each contribute to the Mn(2+) site.

Belongs to the PP2C family. Mg(2+) serves as cofactor. Requires Mn(2+) as cofactor.

The catalysed reaction is O-phospho-L-seryl-[protein] + H2O = L-seryl-[protein] + phosphate. It catalyses the reaction O-phospho-L-threonyl-[protein] + H2O = L-threonyl-[protein] + phosphate. The polypeptide is Probable protein phosphatase 2C 41 (Arabidopsis thaliana (Mouse-ear cress)).